Consider the following 317-residue polypeptide: Transaldolase (317 aa).

The active-site Schiff-base intermediate with substrate is the K132.

It belongs to the transaldolase family. Type 1 subfamily. As to quaternary structure, homodimer.

It is found in the cytoplasm. It carries out the reaction D-sedoheptulose 7-phosphate + D-glyceraldehyde 3-phosphate = D-erythrose 4-phosphate + beta-D-fructose 6-phosphate. It participates in carbohydrate degradation; pentose phosphate pathway; D-glyceraldehyde 3-phosphate and beta-D-fructose 6-phosphate from D-ribose 5-phosphate and D-xylulose 5-phosphate (non-oxidative stage): step 2/3. Transaldolase is important for the balance of metabolites in the pentose-phosphate pathway. This chain is Transaldolase, found in Yersinia pseudotuberculosis serotype O:1b (strain IP 31758).